Here is a 262-residue protein sequence, read N- to C-terminus: 5'-nucleotidase SurE (262 aa).

Residues Asp-11, Asp-12, Ser-43, and Asn-101 each contribute to the a divalent metal cation site. Over residues 220–229 the composition is skewed to basic and acidic residues; the sequence is SAGDGPKEWP. The interval 220–246 is disordered; sequence SAGDGPKEWPSDVSQIETNSPSLTPIQ. A compositionally biased stretch (polar residues) spans 231–244; sequence DVSQIETNSPSLTP.

This sequence belongs to the SurE nucleotidase family. The cofactor is a divalent metal cation.

It is found in the cytoplasm. It catalyses the reaction a ribonucleoside 5'-phosphate + H2O = a ribonucleoside + phosphate. Nucleotidase that shows phosphatase activity on nucleoside 5'-monophosphates. The sequence is that of 5'-nucleotidase SurE from Prochlorococcus marinus (strain SARG / CCMP1375 / SS120).